An 875-amino-acid chain; its full sequence is Metal transporter CNNM2 (875 aa).

The Extracellular segment spans residues 1–250 (MIGCGACEPE…TKMIVGEEKK (250 aa)). N-linked (GlcNAc...) asparagine glycosylation occurs at Asn112. Positions 121-149 (TEHERRRHTPSERGLGGPAPPEPDSGPQR) are disordered. The chain crosses the membrane as a helical span at residues 251-271 (FLLPFWLQVIFISLLLCLSGM). Residues 251 to 431 (FLLPFWLQVI…DPYNDLVKEE (181 aa)) enclose the CNNM transmembrane domain. Topologically, residues 272–313 (FSGLNLGLMALDPMELRIVQNCGTEKEKNYAKRIEPVRRQGN) are cytoplasmic. The helical intramembrane region spans 314-334 (YLLCSLLLGNVLVNTTLTILL). The Cytoplasmic segment spans residues 335 to 338 (DDIA). The helical transmembrane segment at 339-359 (GSGLVAVVVSTIGIVIFGEIV) threads the bilayer. Over 360 to 368 (PQAICSRHG) the chain is Extracellular. Residues 369-389 (LAVGANTIFLTKFFMMMTFPA) traverse the membrane as a helical segment. Residues 390 to 875 (SYPVSKLLDC…NHSLHSEGAI (486 aa)) are Cytoplasmic-facing. CBS domains are found at residues 450–511 (MTPL…CTPL) and 518–584 (YNHP…ILDE). Positions 741–763 (AGSPGENKSPPRPCGLNHSDSLS) are disordered. Ser761 carries the phosphoserine modification.

Belongs to the ACDP family. As to quaternary structure, isoform 1 and isoform 2 may interact with each other. The N-terminus is cleaved within the endoplasmic reticulum. The signal peptidase complex seems to be involved in the processing, but the exact cleavage site has not been identified. In terms of tissue distribution, widely expressed, with highest levels in kidney, lung, spleen and testis. In the kidney, predominantly expressed in the distal convoluted tubule and, at lower levels, in the connecting tubule (at protein level).

The protein localises to the cell membrane. In terms of biological role, divalent metal cation transporter. Mediates transport of divalent metal cations in an order of Mg(2+) &gt; Co(2+) &gt; Mn(2+) &gt; Sr(2+) &gt; Ba(2+) &gt; Cu(2+) &gt; Fe(2+). This chain is Metal transporter CNNM2 (Cnnm2), found in Mus musculus (Mouse).